The sequence spans 309 residues: Olfactory receptor 1A1 (309 aa).

Residues 1–25 lie on the Extracellular side of the membrane; the sequence is MRENNQSSTLEFILLGVTGQQEQED. Residue Asn-5 is glycosylated (N-linked (GlcNAc...) asparagine). The helical transmembrane segment at 26–49 threads the bilayer; that stretch reads FFYILFLFIYPITLIGNLLIVLAI. Topologically, residues 50-57 are cytoplasmic; the sequence is CSDVHLHN. Residues 58–79 traverse the membrane as a helical segment; that stretch reads PMYFLLANLSLVDIFFSSVTIP. The Extracellular segment spans residues 80–100; that stretch reads KMLANHLLGSKSISFGGCLTQ. A disulfide bond links Cys-97 and Cys-189. Residues 101-120 form a helical membrane-spanning segment; it reads MYFMIALGNTDSYILAAMAY. The Cytoplasmic portion of the chain corresponds to 121 to 139; sequence DRAVAISRPLHYTTIMSPR. A helical membrane pass occupies residues 140 to 158; it reads SCIWLIAGSWVIGNANALP. Over 159 to 195 the chain is Extracellular; it reads HTLLTASLSFCGNQEVANFYCDITPLLKLSCSDIHFH. The helical transmembrane segment at 196–218 threads the bilayer; the sequence is VKMMYLGVGIFSVPLLCIIVSYI. The Cytoplasmic portion of the chain corresponds to 219-235; that stretch reads RVFSTVFQVPSTKGVLK. The helical transmembrane segment at 236–258 threads the bilayer; the sequence is AFSTCGSHLTVVSLYYGTVMGMY. The Extracellular segment spans residues 259 to 270; it reads FRPLTNYSLKDA. N-linked (GlcNAc...) asparagine glycosylation is present at Asn-264. The chain crosses the membrane as a helical span at residues 271-290; the sequence is VITVMYTAVTPMLNPFIYSL. Residues 291–309 are Cytoplasmic-facing; it reads RNRDVKAALRKLFNKRISS.

The protein belongs to the G-protein coupled receptor 1 family.

The protein resides in the cell membrane. Odorant receptor. In Pan troglodytes (Chimpanzee), this protein is Olfactory receptor 1A1 (OR1A1).